Consider the following 320-residue polypeptide: Thioredoxin reductase (320 aa).

Position 36–43 (T36–Q43) interacts with FAD. A disulfide bond links C136 and C139. D287–A296 lines the FAD pocket.

Belongs to the class-II pyridine nucleotide-disulfide oxidoreductase family. As to quaternary structure, homodimer. The cofactor is FAD.

It is found in the cytoplasm. The enzyme catalyses [thioredoxin]-dithiol + NADP(+) = [thioredoxin]-disulfide + NADPH + H(+). The polypeptide is Thioredoxin reductase (trxB) (Coxiella burnetii (strain RSA 493 / Nine Mile phase I)).